A 319-amino-acid chain; its full sequence is GTP cyclohydrolase MptA (319 aa).

It belongs to the GTP cyclohydrolase IV family. In terms of assembly, homodimer. Fe(2+) is required as a cofactor.

It catalyses the reaction GTP + H2O = 7,8-dihydroneopterin 2',3'-cyclic phosphate + formate + diphosphate + H(+). Its pathway is cofactor biosynthesis; 5,6,7,8-tetrahydromethanopterin biosynthesis. Its function is as follows. Converts GTP to 7,8-dihydro-D-neopterin 2',3'-cyclic phosphate, the first intermediate in the biosynthesis of coenzyme methanopterin. The sequence is that of GTP cyclohydrolase MptA from Methanosarcina barkeri (strain Fusaro / DSM 804).